Consider the following 128-residue polypeptide: Small ribosomal subunit protein bS6 (128 aa).

This sequence belongs to the bacterial ribosomal protein bS6 family.

Binds together with bS18 to 16S ribosomal RNA. This is Small ribosomal subunit protein bS6 from Nitratiruptor sp. (strain SB155-2).